The following is a 232-amino-acid chain: Protein Mis18-alpha (232 aa).

Phosphoserine is present on residues Ser36, Ser39, and Ser40. A Mis18 domain is found at 79–177; it reads PLVFLCSGCR…SVEAIESYVL (99 aa). Residues Cys84, Cys87, Cys140, and Cys143 each contribute to the Zn(2+) site. Residue Lys161 forms a Glycyl lysine isopeptide (Lys-Gly) (interchain with G-Cter in SUMO2) linkage. A Phosphoserine modification is found at Ser232.

It belongs to the mis18 family. As to quaternary structure, homodimer, and heterodimer with OIP5/MIS18B. Identified in a complex containing MIS18A, OIP5/MIS18B, MIS18BP1, RBBP7 and RBBP4.

The protein resides in the nucleus. The protein localises to the chromosome. It localises to the centromere. Functionally, required for recruitment of CENPA to centromeres and normal chromosome segregation during mitosis. In Pan troglodytes (Chimpanzee), this protein is Protein Mis18-alpha (MIS18A).